We begin with the raw amino-acid sequence, 391 residues long: Formate-dependent phosphoribosylglycinamide formyltransferase (391 aa).

N(1)-(5-phospho-beta-D-ribosyl)glycinamide-binding positions include 18 to 19 (EL) and Glu-78. ATP is bound by residues Arg-110, Lys-151, 156–161 (SSGKGQ), 191–194 (EEFI), and Glu-199. One can recognise an ATP-grasp domain in the interval 115–305 (DLASKDLKIK…EFELHLRAFL (191 aa)). Glu-264 and Glu-276 together coordinate Mg(2+). N(1)-(5-phospho-beta-D-ribosyl)glycinamide contacts are provided by residues Asp-283, Lys-353, and 360–361 (RR).

It belongs to the PurK/PurT family. As to quaternary structure, homodimer.

It carries out the reaction N(1)-(5-phospho-beta-D-ribosyl)glycinamide + formate + ATP = N(2)-formyl-N(1)-(5-phospho-beta-D-ribosyl)glycinamide + ADP + phosphate + H(+). It functions in the pathway purine metabolism; IMP biosynthesis via de novo pathway; N(2)-formyl-N(1)-(5-phospho-D-ribosyl)glycinamide from N(1)-(5-phospho-D-ribosyl)glycinamide (formate route): step 1/1. In terms of biological role, involved in the de novo purine biosynthesis. Catalyzes the transfer of formate to 5-phospho-ribosyl-glycinamide (GAR), producing 5-phospho-ribosyl-N-formylglycinamide (FGAR). Formate is provided by PurU via hydrolysis of 10-formyl-tetrahydrofolate. The protein is Formate-dependent phosphoribosylglycinamide formyltransferase of Prochlorococcus marinus (strain AS9601).